Here is a 72-residue protein sequence, read N- to C-terminus: Large ribosomal subunit protein bL31 (72 aa).

Residues C16, C18, C36, and C39 each coordinate Zn(2+).

This sequence belongs to the bacterial ribosomal protein bL31 family. Type A subfamily. As to quaternary structure, part of the 50S ribosomal subunit. It depends on Zn(2+) as a cofactor.

In terms of biological role, binds the 23S rRNA. In Geobacter sp. (strain M21), this protein is Large ribosomal subunit protein bL31.